Reading from the N-terminus, the 239-residue chain is Pathogenesis-related protein 5 (239 aa).

Positions 1–23 (MANISSIHILFLVFITSGIAVMA) are cleaved as a signal peptide. Intrachain disulfides connect Cys-32-Cys-238, Cys-79-Cys-89, Cys-94-Cys-99, Cys-146-Cys-228, Cys-151-Cys-211, Cys-159-Cys-174, Cys-178-Cys-187, and Cys-188-Cys-198.

It belongs to the thaumatin family.

It localises to the secreted. The protein localises to the extracellular space. Its subcellular location is the apoplast. In terms of biological role, partially responsible for acquired pathogen resistance. This Arabidopsis thaliana (Mouse-ear cress) protein is Pathogenesis-related protein 5.